The following is an 805-amino-acid chain: Ubiquitin carboxyl-terminal hydrolase 10 (805 aa).

A disordered region spans residues 139–170; that stretch reads DGSGNADSDGTSGTGQRERKKKKKRPPGYYSY. A compositionally biased stretch (polar residues) spans 143–153; the sequence is NADSDGTSGTG. The USP domain occupies 422 to 802; it reads RGLINKGNWC…TAYLLYYRRV (381 aa). Cys431 acts as the Nucleophile in catalysis. The interval 561-593 is disordered; that stretch reads HINNGPDPVSEKEEINKDEQEGSDEEWEQVGPR. Residues 569 to 580 are compositionally biased toward basic and acidic residues; the sequence is VSEKEEINKDEQ. Residue His756 is the Proton acceptor of the active site.

It belongs to the peptidase C19 family. USP10 subfamily.

It is found in the cytoplasm. The protein localises to the nucleus. It carries out the reaction Thiol-dependent hydrolysis of ester, thioester, amide, peptide and isopeptide bonds formed by the C-terminal Gly of ubiquitin (a 76-residue protein attached to proteins as an intracellular targeting signal).. Its function is as follows. Hydrolase that can remove conjugated ubiquitin from target proteins such as p53/tp53, rps2/us5, rps3/us3, rps10/eS10, becn1, snx3 and cftr. Acts as an essential regulator of p53/tp53 stability: in unstressed cells, specifically deubiquitinates p53/tp53 in the cytoplasm, leading to counteracts MDM2 action and stabilize p53/tp53. Following DNA damage, translocates to the nucleus and deubiquitinates p53/tp53, leading to regulate the p53/TP53-dependent DNA damage response. Component of a regulatory loop that controls autophagy and p53/tp53 levels. Plays a key role in 40S ribosome subunit recycling when a ribosome has stalled during translation: acts both by inhibiting formation of stress granules, which store stalled translation pre-initiation complexes, and mediating deubiquitination of 40S ribosome subunits. Deubiquitinates cftr in early endosomes, enhancing its endocytic recycling. The polypeptide is Ubiquitin carboxyl-terminal hydrolase 10 (usp10) (Xenopus tropicalis (Western clawed frog)).